Reading from the N-terminus, the 484-residue chain is Zinc metalloproteinase homolog-disintegrin albolatin (484 aa).

The N-terminal stretch at 1–20 (MIQVLLVTICLAVFPYQGSS) is a signal peptide. Residues 21–191 (IILESGNVND…KTSQLNLPLL (171 aa)) constitute a propeptide that is removed on maturation. Asparagine 80, asparagine 251, and asparagine 301 each carry an N-linked (GlcNAc...) asparagine glycan. Residues 194 to 392 (RCIELVMVAD…WTSYCLYNEP (199 aa)) enclose the Peptidase M12B domain. 10 disulfide bridges follow: cysteine 305-cysteine 387, cysteine 345-cysteine 369, cysteine 347-cysteine 352, cysteine 403-cysteine 422, cysteine 414-cysteine 432, cysteine 416-cysteine 427, cysteine 426-cysteine 449, cysteine 440-cysteine 446, cysteine 445-cysteine 470, and cysteine 458-cysteine 477. One can recognise a Disintegrin domain in the interval 400–484 (PPVCGNYYLE…GDCPWIGYYG (85 aa)). The short motif at 462–464 (KGD) is the Cell attachment site; atypical (KGD) element.

It belongs to the venom metalloproteinase (M12B) family. P-II subfamily. P-IIb sub-subfamily. In terms of assembly, homodimer; disulfide-linked (disintegrin). In terms of tissue distribution, expressed by the venom gland.

The protein resides in the secreted. In terms of biological role, the function of this complete protein has not been studied, but it may be similar to the function of the disintegrin domain. A recombinant protein of this domain (409-484) inhibits collagen-induced human platelet aggregation, without having effect on ADP-induced aggregation. It may act either by blocking the binding of fibrinogen to the platelet receptor GPIIb/GPIIIa (ITGA2B/ITGB3) or by blocking the binding of collagen to the integrin alpha-2/beta-1 complex (ITGA2/ITGB1). The sequence is that of Zinc metalloproteinase homolog-disintegrin albolatin from Trimeresurus albolabris (White-lipped pit viper).